A 207-amino-acid polypeptide reads, in one-letter code: Small ribosomal subunit protein uS4 (207 aa).

The 61-residue stretch at 96-156 (SRLDNTVYRM…KKSHKQSRIR (61 aa)) folds into the S4 RNA-binding domain.

It belongs to the universal ribosomal protein uS4 family. In terms of assembly, part of the 30S ribosomal subunit. Contacts protein S5. The interaction surface between S4 and S5 is involved in control of translational fidelity.

In terms of biological role, one of the primary rRNA binding proteins, it binds directly to 16S rRNA where it nucleates assembly of the body of the 30S subunit. Its function is as follows. With S5 and S12 plays an important role in translational accuracy. The chain is Small ribosomal subunit protein uS4 from Blochmanniella pennsylvanica (strain BPEN).